The following is a 129-amino-acid chain: Small ribosomal subunit protein uS9 (129 aa).

The protein belongs to the universal ribosomal protein uS9 family.

This is Small ribosomal subunit protein uS9 from Chlorobium chlorochromatii (strain CaD3).